The primary structure comprises 175 residues: ATP synthase subunit b (175 aa).

The chain crosses the membrane as a helical span at residues 13-33 (LLSPNPGLIFWTAVTFLLLLL).

This sequence belongs to the ATPase B chain family. As to quaternary structure, F-type ATPases have 2 components, F(1) - the catalytic core - and F(0) - the membrane proton channel. F(1) has five subunits: alpha(3), beta(3), gamma(1), delta(1), epsilon(1). F(0) has four main subunits: a(1), b(2) and c(10-14). The alpha and beta chains form an alternating ring which encloses part of the gamma chain. F(1) is attached to F(0) by a central stalk formed by the gamma and epsilon chains, while a peripheral stalk is formed by the delta and b chains.

It localises to the cell inner membrane. F(1)F(0) ATP synthase produces ATP from ADP in the presence of a proton or sodium gradient. F-type ATPases consist of two structural domains, F(1) containing the extramembraneous catalytic core and F(0) containing the membrane proton channel, linked together by a central stalk and a peripheral stalk. During catalysis, ATP synthesis in the catalytic domain of F(1) is coupled via a rotary mechanism of the central stalk subunits to proton translocation. In terms of biological role, component of the F(0) channel, it forms part of the peripheral stalk, linking F(1) to F(0). This Chloroherpeton thalassium (strain ATCC 35110 / GB-78) protein is ATP synthase subunit b.